The sequence spans 322 residues: Undecaprenyl-phosphate 4-deoxy-4-formamido-L-arabinose transferase (322 aa).

The Cytoplasmic segment spans residues 1 to 235; the sequence is MFEIHPVKKV…TCLTTTPLRM (235 aa). Residues 236-256 form a helical membrane-spanning segment; the sequence is LSLLGSIIAIGGFSIAVLLVI. At 257 to 269 the chain is on the periplasmic side; the sequence is LRLTFGPQWAAEG. The helical transmembrane segment at 270 to 290 threads the bilayer; that stretch reads VFMLFAVLFTFIGAQFIGMGL. Topologically, residues 291–322 are cytoplasmic; that stretch reads LGEYIGRIYTDVRARPRYFVQQVIRPSSKENE.

This sequence belongs to the glycosyltransferase 2 family.

Its subcellular location is the cell inner membrane. The catalysed reaction is UDP-4-deoxy-4-formamido-beta-L-arabinose + di-trans,octa-cis-undecaprenyl phosphate = 4-deoxy-4-formamido-alpha-L-arabinopyranosyl di-trans,octa-cis-undecaprenyl phosphate + UDP. It functions in the pathway glycolipid biosynthesis; 4-amino-4-deoxy-alpha-L-arabinose undecaprenyl phosphate biosynthesis; 4-amino-4-deoxy-alpha-L-arabinose undecaprenyl phosphate from UDP-4-deoxy-4-formamido-beta-L-arabinose and undecaprenyl phosphate: step 1/2. The protein operates within bacterial outer membrane biogenesis; lipopolysaccharide biosynthesis. Functionally, catalyzes the transfer of 4-deoxy-4-formamido-L-arabinose from UDP to undecaprenyl phosphate. The modified arabinose is attached to lipid A and is required for resistance to polymyxin and cationic antimicrobial peptides. The polypeptide is Undecaprenyl-phosphate 4-deoxy-4-formamido-L-arabinose transferase (Escherichia coli O139:H28 (strain E24377A / ETEC)).